The chain runs to 143 residues: Transcriptional regulator MraZ (143 aa).

SpoVT-AbrB domains follow at residues 5 to 47 (QYEH…SLDE) and 76 to 119 (AVEC…SKEV).

It belongs to the MraZ family. Forms oligomers.

It is found in the cytoplasm. The protein resides in the nucleoid. The protein is Transcriptional regulator MraZ of Caldanaerobacter subterraneus subsp. tengcongensis (strain DSM 15242 / JCM 11007 / NBRC 100824 / MB4) (Thermoanaerobacter tengcongensis).